A 315-amino-acid chain; its full sequence is Methionyl-tRNA formyltransferase (315 aa).

Ser-113–Pro-116 lines the (6S)-5,6,7,8-tetrahydrofolate pocket.

Belongs to the Fmt family.

The catalysed reaction is L-methionyl-tRNA(fMet) + (6R)-10-formyltetrahydrofolate = N-formyl-L-methionyl-tRNA(fMet) + (6S)-5,6,7,8-tetrahydrofolate + H(+). In terms of biological role, attaches a formyl group to the free amino group of methionyl-tRNA(fMet). The formyl group appears to play a dual role in the initiator identity of N-formylmethionyl-tRNA by promoting its recognition by IF2 and preventing the misappropriation of this tRNA by the elongation apparatus. This Cronobacter sakazakii (strain ATCC BAA-894) (Enterobacter sakazakii) protein is Methionyl-tRNA formyltransferase.